A 367-amino-acid polypeptide reads, in one-letter code: 3-dehydroquinate synthase (367 aa).

Residues 108 to 112 (GVIGD), 132 to 133 (TT), K145, and K154 each bind NAD(+). Residues E187, H249, and H267 each coordinate Zn(2+).

The protein belongs to the sugar phosphate cyclases superfamily. Dehydroquinate synthase family. Co(2+) is required as a cofactor. The cofactor is Zn(2+). Requires NAD(+) as cofactor.

It localises to the cytoplasm. It carries out the reaction 7-phospho-2-dehydro-3-deoxy-D-arabino-heptonate = 3-dehydroquinate + phosphate. Its pathway is metabolic intermediate biosynthesis; chorismate biosynthesis; chorismate from D-erythrose 4-phosphate and phosphoenolpyruvate: step 2/7. In terms of biological role, catalyzes the conversion of 3-deoxy-D-arabino-heptulosonate 7-phosphate (DAHP) to dehydroquinate (DHQ). The polypeptide is 3-dehydroquinate synthase (Paracoccus denitrificans (strain Pd 1222)).